The following is a 1700-amino-acid chain: Balbiani ring protein 3 (1700 aa).

The first 20 residues, 1-20 (MKTLSSLLLVLAVNVLLIQA), serve as a signal peptide directing secretion.

In terms of tissue distribution, salivary gland.

It localises to the secreted. In terms of biological role, used by the larvae to construct a supramolecular structure, the larval tube. Balbiani ring protein 3 could play a role as a transport protein that binds to other proteins intracellularly and in the gland lumen in order to prevent these from forming water-insoluble fibers too early. In Chironomus tentans (Midge), this protein is Balbiani ring protein 3 (BR3).